An 87-amino-acid polypeptide reads, in one-letter code: MANIKSQQKRNRTNERARLRNKSVKSSLRTAVRSFRDAAHSGDKEKAAELLVSTNRKLDKAASKGVIHKNQAANKKSALARALNKLG.

A disordered region spans residues 1-28 (MANIKSQQKRNRTNERARLRNKSVKSSL).

It belongs to the bacterial ribosomal protein bS20 family.

In terms of biological role, binds directly to 16S ribosomal RNA. In Mycobacterium marinum (strain ATCC BAA-535 / M), this protein is Small ribosomal subunit protein bS20.